The sequence spans 3432 residues: Genome polyprotein (3432 aa).

The segment at 2–15 is interaction with host EXOC1; that stretch reads TKKPGGPGKNRAIN. The Cytoplasmic segment spans residues 2-109; that stretch reads TKKPGGPGKN…KKQNKRGGNE (108 aa). The interval 37–72 is hydrophobic; homodimerization of capsid protein C; sequence LLDGRGPVRFVLALITFFKFTALAPTKALLGRWRAV. The propeptide at 106–127 is ER anchor for the capsid protein C, removed in mature form by serine protease NS3; it reads GGNESSIMWLASLAIVIACAGA. A helical transmembrane segment spans residues 110 to 130; it reads SSIMWLASLAIVIACAGAMKL. At 131–253 the chain is on the extracellular side; sequence SNFQGKLLMT…ATRYLMKTEN (123 aa). Asn-142 carries N-linked (GlcNAc...) asparagine; by host glycosylation. Residues 254–274 form a helical membrane-spanning segment; the sequence is WIIRNPGYAFLAAALGWMLGS. Residues 275–279 are Cytoplasmic-facing; it reads NSGQR. The helical transmembrane segment at 280–294 threads the bilayer; it reads VVFTILLLLVAPAYS. The Extracellular segment spans residues 295-746; sequence FNCLGMGNRD…QVFGGAFRTL (452 aa). 6 cysteine pairs are disulfide-bonded: Cys-297/Cys-324, Cys-354/Cys-410, Cys-354/Cys-415, Cys-368/Cys-399, Cys-386/Cys-410, and Cys-386/Cys-415. Residues 392–405 are fusion peptide; sequence DRGWGNGCGLFGKG. An N-linked (GlcNAc...) asparagine; by host glycan is attached at Asn-448. Cystine bridges form between Cys-484-Cys-581 and Cys-598-Cys-629. A helical transmembrane segment spans residues 747–767; it reads FGGMSWITQGLMGALLLWMGV. Residues 768–773 are Cytoplasmic-facing; the sequence is NARDRS. The chain crosses the membrane as a helical span at residues 774 to 794; sequence IALAFLATGGVLVFLATNVHA. Over 795–1219 the chain is Extracellular; that stretch reads DTGCAIDITR…AFAEANSGGD (425 aa). Intrachain disulfides connect Cys-798-Cys-809, Cys-849-Cys-937, Cys-973-Cys-1017, Cys-1074-Cys-1123, Cys-1085-Cys-1106, and Cys-1107-Cys-1110. 2 N-linked (GlcNAc...) asparagine; by host glycosylation sites follow: Asn-924 and Asn-1001. Residues 1220-1240 form a helical membrane-spanning segment; it reads VLHLALIAVFKIQPAFLVMNM. Topologically, residues 1241–1250 are cytoplasmic; the sequence is LSARWTNQEN. A helical membrane pass occupies residues 1251-1271; that stretch reads MVLVLGAAFFQLASVDLQIGV. A topological domain (lumenal) is located at residue His-1272. Residues 1273–1293 traverse the membrane as a helical segment; that stretch reads GILNAAAIAWMIVRAITFPTT. Topologically, residues 1294 to 1309 are cytoplasmic; it reads STVAMPVLALLTPGMR. A helical transmembrane segment spans residues 1310–1330; the sequence is ALYLDTYRIILLVIGICSLLQ. Over 1331-1341 the chain is Lumenal; the sequence is ERRKTMAKKKG. A helical membrane pass occupies residues 1342–1362; it reads AVLLGLALTSTGWFSPTTIAA. The Cytoplasmic segment spans residues 1363 to 1374; that stretch reads GLMVCNPNKKRG. The chain crosses the membrane as a helical span at residues 1375–1395; it reads WPATEFLSAVGLMFAIVGGLA. Topologically, residues 1396–1398 are lumenal; it reads ELD. Residues 1399–1419 form a helical membrane-spanning segment; the sequence is IESMSIPFMLAGLMAVSYVIS. Topologically, residues 1420–1476 are cytoplasmic; the sequence is GKATDMWLDRAADISWEMEAAITGSSRRLDVKLDDDGDFHLIDDPGVPWKVWLLRMS. The interval 1427–1466 is interacts with and activates NS3 protease; that stretch reads LDRAADISWEMEAAITGSSRRLDVKLDDDGDFHLIDDPGV. The helical intramembrane region spans 1477-1497; it reads CIGLAALTPWAIVPAAFGYWL. At 1498–2173 the chain is on the cytoplasmic side; it reads TLKTTKRGGV…RMALEELPDA (676 aa). Residues 1505–1682 form the Peptidase S7 domain; that stretch reads GGVFWDTPSP…DRQEEPVPDA (178 aa). Active-site charge relay system; for serine protease NS3 activity residues include His-1555, Asp-1579, and Ser-1639. Residues 1685–1841 enclose the Helicase ATP-binding domain; the sequence is PSMLKKRQMT…DSNAPIHDLQ (157 aa). An important for RNA-binding region spans residues 1689–1692; sequence KKRQ. 1698-1705 lines the ATP pocket; the sequence is LHPGSGKT. The DEAH box motif lies at 1789-1792; that stretch reads DEAH. A Helicase C-terminal domain is found at 1852–2017; that stretch reads GYEWITEYAG…GLVAQLYGPE (166 aa). Lys-1893 carries the N6-acetyllysine; by host modification. The segment at 1950–1969 is disordered; that stretch reads NPSPITSASAAQRRGRVGRN. A regulates the ATPase activity of NS3 helicase region spans residues 2168 to 2172; it reads EELPD. Residues 2174–2194 traverse the membrane as a helical segment; that stretch reads LETITLIVAITVMTGGFFLLM. Over 2195–2199 the chain is Lumenal; the sequence is MQRKG. Positions 2200 to 2220 form an intramembrane region, helical; the sequence is IGKMGLGALVLTLATFFLWAA. Glu-2221 is a topological domain (lumenal). A helical transmembrane segment spans residues 2222–2242; it reads VPGTKIAGTLLVALLLMVVLI. The Cytoplasmic portion of the chain corresponds to 2243–2257; it reads PEPEKQRSQTDNQLA. Residues 2258 to 2278 traverse the membrane as a helical segment; sequence VFLICVLTVVGVVAANEYGML. At 2279 to 2311 the chain is on the lumenal side; the sequence is EKTKADLKSMFGGRTQAPGLTGLPSMALDLRPA. An intramembrane region (helical) is located at residues 2312–2332; that stretch reads TAWALYGGSTVVLTPLLKHLI. The Lumenal segment spans residues 2333–2368; that stretch reads TSEYVTTSLASISSQAGSLFVLPRGVPFTDLDLTVG. Residues 2369–2389 traverse the membrane as a helical segment; the sequence is LVFLGCWGQITLTTFLTAMVL. Residues 2390-2444 lie on the Cytoplasmic side of the membrane; that stretch reads VTLHYGYMLPGWQAEALRAAQRRTAAGIMKNAVVDGMVATDVPELERTTPLMQKK. Residues 2445 to 2465 form a helical membrane-spanning segment; sequence VGQVLLIGVSVAAFLVNPNVT. Residues 2466 to 2469 are Lumenal-facing; the sequence is TVRE. Residues 2470–2490 traverse the membrane as a helical segment; sequence AGVLVTAATLTLWDNGASAVW. Topologically, residues 2491–3432 are cytoplasmic; the sequence is NSTTATGLCH…DVLIQEDRVI (942 aa). One can recognise an mRNA cap 0-1 NS5-type MT domain in the interval 2528–2793; sequence GRPGGRTLGE…DVNLGSGTRA (266 aa). An S-adenosyl-L-methionine-binding site is contributed by Ser-2583. At Ser-2583 the chain carries Phosphoserine. Lys-2588 serves as the catalytic For 2'-O-MTase activity. Gly-2613, Trp-2614, Thr-2631, Lys-2632, Asp-2658, and Val-2659 together coordinate S-adenosyl-L-methionine. Residue Asp-2673 is the For 2'-O-MTase activity of the active site. Ile-2674 is an S-adenosyl-L-methionine binding site. Catalysis depends on for 2'-O-MTase activity residues Lys-2709 and Glu-2745. An S-adenosyl-L-methionine-binding site is contributed by Tyr-2747. Positions 2967, 2971, 2976, and 2979 each coordinate Zn(2+). The 153-residue stretch at 3057–3209 folds into the RdRp catalytic domain; that stretch reads GKMYADDTAG…KPLDDRFATA (153 aa). Positions 3244, 3260, and 3379 each coordinate Zn(2+).

The protein in the N-terminal section; belongs to the class I-like SAM-binding methyltransferase superfamily. mRNA cap 0-1 NS5-type methyltransferase family. In terms of assembly, homodimer. Interacts (via N-terminus) with host EXOC1 (via C-terminus); this interaction results in EXOC1 degradation through the proteasome degradation pathway. As to quaternary structure, forms heterodimers with envelope protein E in the endoplasmic reticulum and Golgi. Homodimer; in the endoplasmic reticulum and Golgi. Interacts with protein prM. Interacts with non-structural protein 1. Interacts with host HSPA5. In terms of assembly, homodimer; Homohexamer when secreted. Interacts with envelope protein E. NS1 interacts with NS4B. Interacts with host complement protein CFH; this interaction leads to the degradation of C3. As to quaternary structure, interacts (via N-terminus) with serine protease NS3. Forms a heterodimer with serine protease NS3. May form homooligomers. In terms of assembly, forms a heterodimer with NS2B. Interacts with non-structural protein 2A (via N-terminus). Interacts with NS4B. Interacts with unphosphorylated RNA-directed RNA polymerase NS5; this interaction stimulates RNA-directed RNA polymerase NS5 guanylyltransferase activity. Interacts with host ILF2. As to quaternary structure, interacts with serine protease NS3. Homodimer. Interacts with host STAT2; this interaction inhibits the phosphorylation of the latter, and, when all viral proteins are present (polyprotein), targets STAT2 for degradation. Interacts with serine protease NS3. Mn(2+) is required as a cofactor. It depends on Mg(2+) as a cofactor. In terms of processing, specific enzymatic cleavages in vivo yield mature proteins. Cleavages in the lumen of endoplasmic reticulum are performed by host signal peptidase, whereas cleavages in the cytoplasmic side are performed by serine protease NS3. Signal cleavage at the 2K-4B site requires a prior NS3 protease-mediated cleavage at the 4A-2K site. Post-translationally, cleaved in post-Golgi vesicles by a host furin, releasing the mature small envelope protein M, and peptide pr. This cleavage is incomplete as up to 30% of viral particles still carry uncleaved prM. N-glycosylated. In terms of processing, N-glycosylated. The excreted form is glycosylated and this is required for efficient secretion of the protein from infected cells. Post-translationally, acetylated by host KAT5. Acetylation modulates NS3 RNA-binding and unwinding activities and plays an important positive role for viral replication. Phosphorylated on serines residues. This phosphorylation may trigger NS5 nuclear localization.

The protein localises to the host endoplasmic reticulum membrane. It localises to the virion. It is found in the host nucleus. The protein resides in the host cytoplasm. Its subcellular location is the host perinuclear region. The protein localises to the secreted. It localises to the virion membrane. It is found in the host cell surface. It catalyses the reaction Selective hydrolysis of -Xaa-Xaa-|-Yaa- bonds in which each of the Xaa can be either Arg or Lys and Yaa can be either Ser or Ala.. The enzyme catalyses a ribonucleoside 5'-triphosphate + H2O = a ribonucleoside 5'-diphosphate + phosphate + H(+). The catalysed reaction is RNA(n) + a ribonucleoside 5'-triphosphate = RNA(n+1) + diphosphate. It carries out the reaction ATP + H2O = ADP + phosphate + H(+). It catalyses the reaction a 5'-end (5'-triphosphoguanosine)-ribonucleoside in mRNA + S-adenosyl-L-methionine = a 5'-end (N(7)-methyl 5'-triphosphoguanosine)-ribonucleoside in mRNA + S-adenosyl-L-homocysteine. The enzyme catalyses a 5'-end (N(7)-methyl 5'-triphosphoguanosine)-ribonucleoside in mRNA + S-adenosyl-L-methionine = a 5'-end (N(7)-methyl 5'-triphosphoguanosine)-(2'-O-methyl-ribonucleoside) in mRNA + S-adenosyl-L-homocysteine + H(+). Functionally, plays a role in virus budding by binding to the cell membrane and gathering the viral RNA into a nucleocapsid that forms the core of a mature virus particle. During virus entry, may induce genome penetration into the host cytoplasm after hemifusion induced by the surface proteins. Can migrate to the cell nucleus where it modulates host functions. Overcomes the anti-viral effects of host EXOC1 by sequestering and degrading the latter through the proteasome degradation pathway. Its function is as follows. Inhibits RNA silencing by interfering with host Dicer. In terms of biological role, prevents premature fusion activity of envelope proteins in trans-Golgi by binding to envelope protein E at pH6.0. After virion release in extracellular space, gets dissociated from E dimers. Acts as a chaperone for envelope protein E during intracellular virion assembly by masking and inactivating envelope protein E fusion peptide. prM is the only viral peptide matured by host furin in the trans-Golgi network probably to avoid catastrophic activation of the viral fusion activity in acidic Golgi compartment prior to virion release. prM-E cleavage is inefficient, and many virions are only partially matured. These uncleaved prM would play a role in immune evasion. Functionally, may play a role in virus budding. Exerts cytotoxic effects by activating a mitochondrial apoptotic pathway through M ectodomain. May display a viroporin activity. Its function is as follows. Binds to host cell surface receptor and mediates fusion between viral and cellular membranes. Efficient virus attachment to cell is, at least in part, mediated by host HSPA5. Envelope protein is synthesized in the endoplasmic reticulum in the form of heterodimer with protein prM. They play a role in virion budding in the ER, and the newly formed immature particle is covered with 60 spikes composed of heterodimer between precursor prM and envelope protein E. The virion is transported to the Golgi apparatus where the low pH causes dissociation of PrM-E heterodimers and formation of E homodimers. prM-E cleavage is inefficient, and many virions are only partially matured. These uncleaved prM would play a role in immune evasion. In terms of biological role, involved in immune evasion, pathogenesis and viral replication. Once cleaved off the polyprotein, is targeted to three destinations: the viral replication cycle, the plasma membrane and the extracellular compartment. Essential for viral replication. Required for formation of the replication complex and recruitment of other non-structural proteins to the ER-derived membrane structures. Excreted as a hexameric lipoparticle that plays a role against host immune response. Antagonizing the complement function. Binds to the host macrophages and dendritic cells. Inhibits signal transduction originating from Toll-like receptor 3 (TLR3). Component of the viral RNA replication complex that functions in virion assembly and antagonizes the host alpha/beta interferon antiviral response. Functionally, required cofactor for the serine protease function of NS3. May have membrane-destabilizing activity and form viroporins. Its function is as follows. Displays three enzymatic activities: serine protease, NTPase and RNA helicase. NS3 serine protease, in association with NS2B, performs its autocleavage and cleaves the polyprotein at dibasic sites in the cytoplasm: C-prM, NS2A-NS2B, NS2B-NS3, NS3-NS4A, NS4A-2K and NS4B-NS5. NS3 RNA helicase binds RNA and unwinds dsRNA in the 3' to 5' direction. In terms of biological role, regulates the ATPase activity of the NS3 helicase activity. NS4A allows NS3 helicase to conserve energy during unwinding. Functions as a signal peptide for NS4B and is required for the interferon antagonism activity of the latter. Functionally, induces the formation of ER-derived membrane vesicles where the viral replication takes place. Inhibits interferon (IFN)-induced host STAT1 phosphorylation and nuclear translocation, thereby preventing the establishment of cellular antiviral state by blocking the IFN-alpha/beta pathway. Inhibits STAT2 translocation in the nucleus after IFN-alpha treatment. Its function is as follows. Replicates the viral (+) and (-) RNA genome. Performs the capping of genomes in the cytoplasm. NS5 methylates viral RNA cap at guanine N-7 and ribose 2'-O positions. Besides its role in RNA genome replication, also prevents the establishment of cellular antiviral state by blocking the interferon-alpha/beta (IFN-alpha/beta) signaling pathway. Inhibits host TYK2 and STAT2 phosphorylation, thereby preventing activation of JAK-STAT signaling pathway. The polypeptide is Genome polyprotein (Japanese encephalitis virus (strain M28) (JEV)).